The sequence spans 66 residues: Large ribosomal subunit protein bL33c (66 aa).

This sequence belongs to the bacterial ribosomal protein bL33 family.

The protein resides in the plastid. Its subcellular location is the chloroplast. The sequence is that of Large ribosomal subunit protein bL33c from Vitis vinifera (Grape).